Here is a 166-residue protein sequence, read N- to C-terminus: Early E3 18.5 kDa glycoprotein (166 aa).

Positions 1-19 (MGPILVLLVLLSLLEAGSA) are cleaved as a signal peptide. Topologically, residues 20 to 131 (NYDPCLDFDP…SKDNIVTFSI (112 aa)) are lumenal. Asn31 is a glycosylation site (N-linked (GlcNAc...) asparagine; by host). Cystine bridges form between Cys32/Cys50 and Cys44/Cys106. Residues Asn63, Asn67, and Asn97 are each glycosylated (N-linked (GlcNAc...) asparagine; by host). A helical transmembrane segment spans residues 132–152 (AYCLCACLLTALLCVCIHLLV). The Cytoplasmic segment spans residues 153–166 (TTRIKNANNKEKMP). A Di-lysine motif motif is present at residues 162–166 (KEKMP).

The protein belongs to the adenoviridae E19 family. In terms of processing, both disulfide bonds are absolutely critical for the interaction with MHC antigens. N-glycosylated; high-mannose.

Its subcellular location is the host endoplasmic reticulum membrane. Functionally, binds and retains class I heavy chains in the endoplasmic reticulum during the early period of virus infection, thereby impairing their transport to the cell surface. Also delays the expression of class I alleles that it cannot affect by direct retention. Binds transporters associated with antigen processing (TAP) and acts as a tapasin inhibitor, preventing class I/TAP association. In consequence, infected cells are masked for immune recognition by cytotoxic T-lymphocytes. The chain is Early E3 18.5 kDa glycoprotein from Human adenovirus B serotype 11 (strain BC34) (HAdV-11).